A 196-amino-acid polypeptide reads, in one-letter code: FMN-dependent NADH:quinone oxidoreductase (196 aa).

Residue S10 participates in FMN binding.

Belongs to the azoreductase type 1 family. In terms of assembly, homodimer. FMN serves as cofactor.

The catalysed reaction is 2 a quinone + NADH + H(+) = 2 a 1,4-benzosemiquinone + NAD(+). It carries out the reaction N,N-dimethyl-1,4-phenylenediamine + anthranilate + 2 NAD(+) = 2-(4-dimethylaminophenyl)diazenylbenzoate + 2 NADH + 2 H(+). Quinone reductase that provides resistance to thiol-specific stress caused by electrophilic quinones. In terms of biological role, also exhibits azoreductase activity. Catalyzes the reductive cleavage of the azo bond in aromatic azo compounds to the corresponding amines. The polypeptide is FMN-dependent NADH:quinone oxidoreductase (Cereibacter sphaeroides (strain ATCC 17029 / ATH 2.4.9) (Rhodobacter sphaeroides)).